The primary structure comprises 389 residues: Probable dual-specificity RNA methyltransferase RlmN (389 aa).

Residue Glu-114 is the Proton acceptor of the active site. The Radical SAM core domain maps to 120-358 (QHYGLSVCVT…CVVRQEHGTD (239 aa)). A disulfide bridge connects residues Cys-127 and Cys-363. Positions 134, 138, and 141 each coordinate [4Fe-4S] cluster. S-adenosyl-L-methionine-binding positions include 186-187 (GE), Ser-218, 241-243 (SLH), and Asn-319. Cys-363 serves as the catalytic S-methylcysteine intermediate. The disordered stretch occupies residues 370–389 (TMKRDRQKAVAEASGKSEGK). Residues 371–389 (MKRDRQKAVAEASGKSEGK) are compositionally biased toward basic and acidic residues.

Belongs to the radical SAM superfamily. RlmN family. [4Fe-4S] cluster is required as a cofactor.

The protein localises to the cytoplasm. The enzyme catalyses adenosine(2503) in 23S rRNA + 2 reduced [2Fe-2S]-[ferredoxin] + 2 S-adenosyl-L-methionine = 2-methyladenosine(2503) in 23S rRNA + 5'-deoxyadenosine + L-methionine + 2 oxidized [2Fe-2S]-[ferredoxin] + S-adenosyl-L-homocysteine. It carries out the reaction adenosine(37) in tRNA + 2 reduced [2Fe-2S]-[ferredoxin] + 2 S-adenosyl-L-methionine = 2-methyladenosine(37) in tRNA + 5'-deoxyadenosine + L-methionine + 2 oxidized [2Fe-2S]-[ferredoxin] + S-adenosyl-L-homocysteine. Functionally, specifically methylates position 2 of adenine 2503 in 23S rRNA and position 2 of adenine 37 in tRNAs. The protein is Probable dual-specificity RNA methyltransferase RlmN of Streptococcus thermophilus (strain ATCC BAA-250 / LMG 18311).